The primary structure comprises 66 residues: Large ribosomal subunit protein eL24 (66 aa).

Zn(2+) is bound by residues Cys-6, Cys-9, Cys-32, and Cys-36. The C4-type zinc finger occupies 6 to 36; the sequence is CSFCGKSIEPASGFLYVRKDGSVLNFCSRKC.

Belongs to the eukaryotic ribosomal protein eL24 family. In terms of assembly, part of the 50S ribosomal subunit. Forms a cluster with proteins L3 and L14. The cofactor is Zn(2+).

Its function is as follows. Binds to the 23S rRNA. This is Large ribosomal subunit protein eL24 from Picrophilus torridus (strain ATCC 700027 / DSM 9790 / JCM 10055 / NBRC 100828 / KAW 2/3).